A 117-amino-acid polypeptide reads, in one-letter code: MHVSNFTAGLLLLVIAFGGTSIILKHKVERLETSVTEITKTANENALALNNLRIQYNYIDAMNNKNREAIAAIERENEKLRKDAKKADVVAHKPGLVEKQINNSFNKFAEDIQDLSK.

Topologically, residues methionine 1 to histidine 2 are cytoplasmic. A helical; Signal-anchor for type II membrane protein membrane pass occupies residues valine 3–isoleucine 23. Positions leucine 24–lysine 93 form a coiled coil. Topologically, residues leucine 24–lysine 117 are periplasmic.

Interacts (via C-terminus) with the spanin outer lipoprotein subunit (via C-terminus). Part of the spanin complex which spans the entire periplasmic space. The spanin complex is composed of spanin inner membrane subunit and spanin outer membrane subunit.

It localises to the host cell inner membrane. Component of the spanin complex that disrupts the host outer membrane and participates in cell lysis during virus exit. The spanin complex conducts the final step in host lysis by disrupting the outer membrane after holin and endolysin action have permeabilized the inner membrane and degraded the host peptidoglycans. Host outer membrane disruption is possibly due to local fusion between the inner and outer membrane performed by the spanin complex. In Enterobacteria phage T4 (Bacteriophage T4), this protein is Spanin, inner membrane subunit (y13K).